The chain runs to 516 residues: Delta(24)-sterol reductase (516 aa).

The N-terminal stretch at 1–22 (MEPAVSLAVCALLFLLWVRLKG) is a signal peptide. Residues 23 to 31 (LEFVLIHQR) lie on the Lumenal side of the membrane. Residues 32-52 (WVFVCLFLLPLSLIFDIYYYV) form a helical membrane-spanning segment. The Cytoplasmic portion of the chain corresponds to 53-516 (RAWVVFKLSS…YDKICKAARH (464 aa)). Residues 58–234 (FKLSSAPRLH…VAAEIRIIPA (177 aa)) form the FAD-binding PCMH-type domain. Position 163-175 (163-175 (TVGGLIMGTGIES)) interacts with FAD.

This sequence belongs to the FAD-binding oxidoreductase/transferase type 4 family. Interacts with DHCR7; this interaction regulates DHCR7 activity. It depends on FAD as a cofactor. As to expression, highly expressed in brain and adrenal gland with moderate expression in liver, lung, spleen, prostate and spinal cord. Low expression in heart, uterus and prostate. Undetectable in blood cells. In the brain, strongly expressed in cortical regions, substantia nigra, caudate nucleus, hippocampus, medulla oblongata and pons. In brains affected by Alzheimer disease, expression in the inferior temporal lobe is substantially lower than in the frontal cortex.

It localises to the endoplasmic reticulum membrane. The protein resides in the golgi apparatus membrane. It carries out the reaction cholesterol + NADP(+) = desmosterol + NADPH + H(+). The enzyme catalyses lanosterol + NADPH + H(+) = 24,25-dihydrolanosterol + NADP(+). It catalyses the reaction 5alpha-cholest-8-en-3beta-ol + NADP(+) = zymosterol + NADPH + H(+). It participates in steroid biosynthesis; cholesterol biosynthesis. Catalyzes the reduction of the delta-24 double bond of sterol intermediates during cholesterol biosynthesis. In addition to its cholesterol-synthesizing activity, can protect cells from oxidative stress by reducing caspase 3 activity during apoptosis induced by oxidative stress. Also protects against amyloid-beta peptide-induced apoptosis. The protein is Delta(24)-sterol reductase (DHCR24) of Homo sapiens (Human).